A 188-amino-acid chain; its full sequence is Zinc finger protein 428 (188 aa).

A disordered region spans residues 1-162 (MTETREPAET…EEEEEEGTYH (162 aa)). Over residues 40 to 61 (PDSEEEEDEEEEEEETTDDPEY) the composition is skewed to acidic residues. Over residues 84–94 (RAAQPPAQPCQ) the composition is skewed to low complexity. Residue Thr-108 is modified to Phosphothreonine. Positions 116 to 129 (PATAPQEAPAPEGR) are enriched in low complexity. Positions 138-149 (PPRAGEGRPAGR) are enriched in basic and acidic residues. The segment at 161-183 (YHCTECEDSFDNLGELHGHFMLH) adopts a C2H2-type zinc-finger fold.

The protein is Zinc finger protein 428 (ZNF428) of Homo sapiens (Human).